A 479-amino-acid chain; its full sequence is Adenosylhomocysteinase (479 aa).

Residues Thr-65, Asp-144, and Glu-204 each coordinate substrate. Residue Thr-205–Thr-207 participates in NAD(+) binding. Substrate contacts are provided by Lys-234 and Asp-238. NAD(+) contacts are provided by residues Asn-239, Gly-268–Gly-273, Glu-291, Asn-326, Ile-347–His-349, and Asn-392.

Belongs to the adenosylhomocysteinase family. The cofactor is NAD(+).

The protein localises to the cytoplasm. It catalyses the reaction S-adenosyl-L-homocysteine + H2O = L-homocysteine + adenosine. Its pathway is amino-acid biosynthesis; L-homocysteine biosynthesis; L-homocysteine from S-adenosyl-L-homocysteine: step 1/1. Its function is as follows. May play a key role in the regulation of the intracellular concentration of adenosylhomocysteine. This Variovorax paradoxus (strain S110) protein is Adenosylhomocysteinase.